A 298-amino-acid chain; its full sequence is Aspartate carbamoyltransferase catalytic subunit (298 aa).

2 residues coordinate carbamoyl phosphate: R50 and T51. K79 provides a ligand contact to L-aspartate. Carbamoyl phosphate is bound by residues R100, H128, and Q131. L-aspartate-binding residues include R160 and R221. Residues L260 and P261 each contribute to the carbamoyl phosphate site.

The protein belongs to the aspartate/ornithine carbamoyltransferase superfamily. ATCase family. Heterooligomer of catalytic and regulatory chains.

It catalyses the reaction carbamoyl phosphate + L-aspartate = N-carbamoyl-L-aspartate + phosphate + H(+). It functions in the pathway pyrimidine metabolism; UMP biosynthesis via de novo pathway; (S)-dihydroorotate from bicarbonate: step 2/3. Functionally, catalyzes the condensation of carbamoyl phosphate and aspartate to form carbamoyl aspartate and inorganic phosphate, the committed step in the de novo pyrimidine nucleotide biosynthesis pathway. The sequence is that of Aspartate carbamoyltransferase catalytic subunit from Methanospirillum hungatei JF-1 (strain ATCC 27890 / DSM 864 / NBRC 100397 / JF-1).